An 808-amino-acid polypeptide reads, in one-letter code: Sucrose synthase (808 aa).

The GT-B glycosyltransferase stretch occupies residues 271-753 (MLFRIALISP…GIERVYSTYT (483 aa)).

The protein belongs to the glycosyltransferase 1 family. In terms of assembly, probably a homotetramer.

It catalyses the reaction an NDP-alpha-D-glucose + D-fructose = a ribonucleoside 5'-diphosphate + sucrose + H(+). It carries out the reaction ADP-alpha-D-glucose + D-fructose = sucrose + ADP + H(+). In terms of biological role, catalyzes the reversible conversion of sucrose and a nucleotide disphosphate (NDP) into fructose and NDP-glucose; although the reaction is freely reversible in vitro, the physiological reaction seems to be sucrose cleavage. Unlike characterized plant enzymes prefers ADP as a cosubstrate, whereas plants prefer UDP. Its preference for ADP over UDP suggests it may directly link sucrose and glycogen metabolism. The polypeptide is Sucrose synthase (Thermosynechococcus vestitus (strain NIES-2133 / IAM M-273 / BP-1)).